Here is a 90-residue protein sequence, read N- to C-terminus: Small ribosomal subunit protein bS6 (90 aa).

Lys33 is covalently cross-linked (Isoglutamyl lysine isopeptide (Lys-Gln) (interchain with Q-Cter in protein Pup)).

Belongs to the bacterial ribosomal protein bS6 family.

In terms of biological role, binds together with bS18 to 16S ribosomal RNA. The sequence is that of Small ribosomal subunit protein bS6 (rpsF) from Mycolicibacterium smegmatis (strain ATCC 700084 / mc(2)155) (Mycobacterium smegmatis).